A 1690-amino-acid polypeptide reads, in one-letter code: Lysine-specific demethylase 5A (1690 aa).

The region spanning 19-60 (CPVFEPSWEEFTDPLSFIGRIRPLAEKTGICKIRPPKDWQPP) is the JmjN domain. One can recognise an ARID domain in the interval 84–174 (TRVRLDFLDQ…ILYPYELFQS (91 aa)). A Glycyl lysine isopeptide (Lys-Gly) (interchain with G-Cter in SUMO2) cross-link involves residue Lys-191. At Ser-204 the chain carries Phosphoserine. The PHD-type 1 zinc-finger motif lies at 293 to 343 (LYVCMFCGRGNNEDKLLLCDGCDDSYHTFCLIPPLPDVPKGDWRCPKCVAE). Tyr-409 is a 2-oxoglutarate binding site. Residues 419–423 (GSGFP) carry the GSGFP motif motif. Positions 437–603 (EYALSGWNLN…IGRQCVNHYR (167 aa)) constitute a JmjC domain. Residues His-483 and Glu-485 each coordinate Fe cation. The 2-oxoglutarate site is built by Ser-491, Asn-493, and Lys-501. His-571 is a Fe cation binding site. The C5HC2 zinc finger occupies 676–728 (CSACRTTCFLSALTCSCNPERLVCLYHPTDLCPCPMQKKCLRYRYPLEDLPSL). A Glycyl lysine isopeptide (Lys-Gly) (interchain with G-Cter in SUMO2) cross-link involves residue Lys-1007. Ser-1111 carries the post-translational modification Phosphoserine. The segment at 1161–1218 (VKFCICRKTASGFMLQCELCKDWFHNSCVPLPKSSSQKKGSSWQAKEVKFLCPLCMRS) adopts a PHD-type 2 zinc-finger fold. Disordered stretches follow at residues 1327 to 1348 (SVSS…SDED) and 1407 to 1433 (KSCS…LEPP). 2 positions are modified to phosphoserine: Ser-1330 and Ser-1331. The segment covering 1337 to 1348 (DYDDEETDSDED) has biased composition (acidic residues). Position 1343 is a phosphothreonine (Thr-1343). Ser-1345 is subject to Phosphoserine. Residues Ser-1438 and Ser-1488 each carry the phosphoserine modification. 2 stretches are compositionally biased toward basic and acidic residues: residues 1490 to 1503 (EEKP…DSSE) and 1520 to 1530 (GKQKSKELKKM). Disordered regions lie at residues 1490–1509 (EEKP…RKRK) and 1516–1543 (LFGE…LGAD). The residue at position 1595 (Tyr-1595) is a Phosphotyrosine. 2 positions are modified to phosphoserine: Ser-1598 and Ser-1603. The segment at 1607 to 1661 (NAVCAAQNCQRPCKDKVDWVQCDGGCDEWFHQVCVGVSPEMAENEDYICINCAKK) adopts a PHD-type 3 zinc-finger fold. Residues 1623-1690 (VDWVQCDGGC…LPMEDLKETS (68 aa)) form an interaction with LMO2 region. Ser-1666 bears the Phosphoserine mark.

Belongs to the JARID1 histone demethylase family. In terms of assembly, interacts with SUZ12; the interaction is direct. Interacts with the viral protein-binding domain of RB1. Interacts with ESR1, MYC, MYCN and LMO2. Interacts with HDAC1; this interaction impairs histone deacetylation by HDAC1. Interacts with BMAL1 and CLOCK. Interacts (via PHD-type 1 zinc finger) with histone H3 unmodified at 'Lys-4' and (via PHD-type 3 zinc finger) with histone H3 di- and trimethylated at 'Lys-4'. Fe(2+) is required as a cofactor.

The protein resides in the nucleus. It is found in the nucleolus. The catalysed reaction is N(6),N(6),N(6)-trimethyl-L-lysyl(4)-[histone H3] + 3 2-oxoglutarate + 3 O2 = L-lysyl(4)-[histone H3] + 3 formaldehyde + 3 succinate + 3 CO2. Its activity is regulated as follows. The inhibitors KDOAM-25, CPI-455 and others inhibits its demethylase activity, resulting to cell growth arrest in cancer cells. Functionally, histone demethylase that specifically demethylates 'Lys-4' of histone H3, thereby playing a central role in histone code. Does not demethylate histone H3 'Lys-9', H3 'Lys-27', H3 'Lys-36', H3 'Lys-79' or H4 'Lys-20'. Demethylates trimethylated and dimethylated but not monomethylated H3 'Lys-4'. Regulates specific gene transcription through DNA-binding on 5'-CCGCCC-3' motif. May stimulate transcription mediated by nuclear receptors. Involved in transcriptional regulation of Hox proteins during cell differentiation. May participate in transcriptional repression of cytokines such as CXCL12. Plays a role in the regulation of the circadian rhythm and in maintaining the normal periodicity of the circadian clock. In a histone demethylase-independent manner, acts as a coactivator of the CLOCK-BMAL1-mediated transcriptional activation of PER1/2 and other clock-controlled genes and increases histone acetylation at PER1/2 promoters by inhibiting the activity of HDAC1. Seems to act as a transcriptional corepressor for some genes such as MT1F and to favor the proliferation of cancer cells. This is Lysine-specific demethylase 5A from Homo sapiens (Human).